The sequence spans 66 residues: Large ribosomal subunit protein bL35 (66 aa).

Basic residues predominate over residues 24-43 (HKKAGKRHNLSKKSKARKRR). Residues 24-44 (HKKAGKRHNLSKKSKARKRRL) are disordered.

This sequence belongs to the bacterial ribosomal protein bL35 family.

The protein is Large ribosomal subunit protein bL35 of Dictyoglomus thermophilum (strain ATCC 35947 / DSM 3960 / H-6-12).